Here is a 324-residue protein sequence, read N- to C-terminus: Probable UDP-sugar transporter protein SLC35A4 (324 aa).

The Cytoplasmic portion of the chain corresponds to 1-18 (MSVEDGGLPGLGGPGQAR). Residues 19-39 (WTLMLLLSTATYGAHAPLLAL) form a helical membrane-spanning segment. At 40–52 (CHVDGRVPFRPSS) the chain is on the lumenal side. Residues 53–73 (AVLLTELTKLLLCALSLLVGW) traverse the membrane as a helical segment. Topologically, residues 74–85 (QAWPPRTPPWRQ) are cytoplasmic. A helical membrane pass occupies residues 86–106 (AAPFALSALLYGANNNLVIHL). Residues 107–140 (QHYMDPSTYQVLSNLKIGSTALFYCLCLRRRLSA) lie on the Lumenal side of the membrane. The helical transmembrane segment at 141-161 (RQGLALLLLMAAGACYAAGGL) threads the bilayer. Residues 162-177 (RDPGSPLPESPSTAAS) are Cytoplasmic-facing. Residues 178–198 (GPVPLHVTAPGLLLLLLYCLI) form a helical membrane-spanning segment. Residues 199–214 (SGLSSVYTELLLKRQR) are Lumenal-facing. The chain crosses the membrane as a helical span at residues 215–235 (LPLALQNLFLYTFGVLLNLGL). The Cytoplasmic segment spans residues 236-248 (HAGGGPGPGLLEG). The helical transmembrane segment at 249–271 (FSGWAALVVLSQALNGLLMSAVM) threads the bilayer. Residues 272–279 (KHGSSITR) are Lumenal-facing. Residues 280–300 (LFVVSCSLVVNAVLSAALLRL) traverse the membrane as a helical segment. The Cytoplasmic portion of the chain corresponds to 301–324 (QLTAAFFLAALLIGLAVHLYYGSR).

Belongs to the nucleotide-sugar transporter family. SLC35A subfamily. Found in a complex with SLC35A2 and SLC35A3.

It localises to the golgi apparatus membrane. It catalyses the reaction CDP-L-ribitol(in) + CDP(out) = CDP-L-ribitol(out) + CDP(in). Functionally, mediates the transport of CDP-ribitol. Does not exhibit CMP-sialic acid, UDP-galactose and UDP-N-acetylglucosamine transport activity. This chain is Probable UDP-sugar transporter protein SLC35A4, found in Sus scrofa (Pig).